A 336-amino-acid chain; its full sequence is Dihydroorotate dehydrogenase (quinone) (336 aa).

FMN contacts are provided by residues 62–66 and Thr86; that span reads AGLEK. Lys66 serves as a coordination point for substrate. Residue 111-115 participates in substrate binding; that stretch reads NRMGF. FMN is bound by residues Asn139 and Asn172. Substrate is bound at residue Asn172. Residue Ser175 is the Nucleophile of the active site. Asn177 serves as a coordination point for substrate. Residues Lys217 and Thr245 each coordinate FMN. Substrate is bound at residue 246–247; that stretch reads NT. FMN-binding positions include Gly268, Gly297, and 318-319; that span reads YS.

It belongs to the dihydroorotate dehydrogenase family. Type 2 subfamily. In terms of assembly, monomer. The cofactor is FMN.

It localises to the cell membrane. It carries out the reaction (S)-dihydroorotate + a quinone = orotate + a quinol. The protein operates within pyrimidine metabolism; UMP biosynthesis via de novo pathway; orotate from (S)-dihydroorotate (quinone route): step 1/1. Functionally, catalyzes the conversion of dihydroorotate to orotate with quinone as electron acceptor. The protein is Dihydroorotate dehydrogenase (quinone) of Aliivibrio salmonicida (strain LFI1238) (Vibrio salmonicida (strain LFI1238)).